A 125-amino-acid chain; its full sequence is Fluoride-specific ion channel FluC (125 aa).

4 helical membrane-spanning segments follow: residues 4–24 (VIYVALGGAVGSVLRYWVGIV), 32–52 (FLPWGTFSVNLIGSFCIGLFA), 68–88 (LLITGLLGGFTTFSAFMLDTV), and 100–120 (AFYVAASIGFGVGAVFAGLAV). Na(+) is bound by residues G75 and T78.

The protein belongs to the fluoride channel Fluc/FEX (TC 1.A.43) family.

It is found in the cell inner membrane. It catalyses the reaction fluoride(in) = fluoride(out). Its activity is regulated as follows. Na(+) is not transported, but it plays an essential structural role and its presence is essential for fluoride channel function. Fluoride-specific ion channel. Important for reducing fluoride concentration in the cell, thus reducing its toxicity. In Allorhizobium ampelinum (strain ATCC BAA-846 / DSM 112012 / S4) (Agrobacterium vitis (strain S4)), this protein is Fluoride-specific ion channel FluC.